We begin with the raw amino-acid sequence, 107 residues long: UPF0060 membrane protein Atu1058 (107 aa).

Helical transmembrane passes span 5–25 (LIYV…WAWL), 32–52 (WILL…TLVA), 59–79 (AYAA…WGVE), and 85–105 (RWDI…LFGP).

The protein belongs to the UPF0060 family.

It localises to the cell inner membrane. The protein is UPF0060 membrane protein Atu1058 of Agrobacterium fabrum (strain C58 / ATCC 33970) (Agrobacterium tumefaciens (strain C58)).